Here is a 322-residue protein sequence, read N- to C-terminus: GTP 3',8-cyclase (322 aa).

Residues 5–217 (SYGRVVDYLR…DIISKKYNIK (213 aa)) enclose the Radical SAM core domain. Arg14 contributes to the GTP binding site. The [4Fe-4S] cluster site is built by Cys21 and Cys25. Tyr27 lines the S-adenosyl-L-methionine pocket. Cys28 is a binding site for [4Fe-4S] cluster. Arg64 lines the GTP pocket. Residue Gly68 participates in S-adenosyl-L-methionine binding. GTP is bound at residue Thr95. Ser119 contributes to the S-adenosyl-L-methionine binding site. Residue Lys155 coordinates GTP. S-adenosyl-L-methionine is bound at residue Met189. Cys249 and Cys252 together coordinate [4Fe-4S] cluster. 254 to 256 (RLR) is a GTP binding site. Cys266 serves as a coordination point for [4Fe-4S] cluster.

It belongs to the radical SAM superfamily. MoaA family. As to quaternary structure, monomer and homodimer. Requires [4Fe-4S] cluster as cofactor.

The catalysed reaction is GTP + AH2 + S-adenosyl-L-methionine = (8S)-3',8-cyclo-7,8-dihydroguanosine 5'-triphosphate + 5'-deoxyadenosine + L-methionine + A + H(+). It functions in the pathway cofactor biosynthesis; molybdopterin biosynthesis. In terms of biological role, catalyzes the cyclization of GTP to (8S)-3',8-cyclo-7,8-dihydroguanosine 5'-triphosphate. The polypeptide is GTP 3',8-cyclase (Campylobacter fetus subsp. fetus (strain 82-40)).